The sequence spans 417 residues: Pre-mRNA-splicing factor PRP46 (417 aa).

WD repeat units follow at residues 119–159, 162–201, 209–248, 251–290, 293–334, 337–376, and 385–417; these read AHQG…LKAT, GHIM…SSSG, GHVG…EIMV, GHRS…TQLA, HHSK…NEFG, GENK…LLQS, and STES…WGEE.

The protein belongs to the WD repeat PRL1/PRL2 family. Associated with the spliceosome.

It is found in the cytoplasm. Its subcellular location is the nucleus. Its function is as follows. Involved in pre-mRNA splicing and required for cell cycle progression at G2/M. The chain is Pre-mRNA-splicing factor PRP46 (PRP46) from Debaryomyces hansenii (strain ATCC 36239 / CBS 767 / BCRC 21394 / JCM 1990 / NBRC 0083 / IGC 2968) (Yeast).